Here is a 489-residue protein sequence, read N- to C-terminus: MEEGKMDENEWSYHGEGNKSLVVAHAQRCVVLRFLKFPPNKKKTSEEILQHLQNIVDFGKNVMKDFLGENYVHCGEVVQLPLEFVKQLCLKIQCERPESRCDKDLDTLSGYAMCLPNLTRLQTFPFAEHRPILCVEIKPKCGFIPFSNGVTHEMKHKVCRYCMHQHLKVATGKWKKISKYCPLDLYSGNKQRMHFALKSLLQEAQNNLRIFKNGELIYGCADARSPVADLKALAHHLKPFFFPSNGLASGPQCTRAVIRELVHVITRVLLSTSDKGRAGALRLGLQGARVCEASPFSRSLHHQGKNTPEHSGLPKGCLLYKTLQVQMLDQLDIEGLYPLYNRVEQYLEEFPEERKTLQIDGPYDEVFYQKLLDLSTEDDGTVAFALTKVQQYRVAMTAKDCSIMIALSPCLQGASSDQRPVIPSSRSRLAFSVSVLDLDLKPYESIPHQYKLDSKIVSYYSKTVHAKDDTVRSTRFKEHEDCTLVLHKV.

Positions 136-140 (EIKPK) match the EXKPK motif motif.

This sequence belongs to the IPK1 type 2 family.

Its subcellular location is the cytoplasm. The protein localises to the nucleus. The catalysed reaction is 1D-myo-inositol 1,3,4,5,6-pentakisphosphate + ATP = 1D-myo-inositol hexakisphosphate + ADP + H(+). In terms of biological role, phosphorylates Ins(1,3,4,5,6)P5 at position 2 to form Ins(1,2,3,4,5,6)P6 (InsP6 or phytate). InsP6 is involved in many processes such as mRNA export, non-homologous end-joining, endocytosis, ion channel regulation. It also protects cells from TNF-alpha-induced apoptosis. The polypeptide is Inositol-pentakisphosphate 2-kinase (Ippk) (Rattus norvegicus (Rat)).